Here is a 426-residue protein sequence, read N- to C-terminus: MSKSENLYSAARELIPGGVNSPVRAFTGVGGTPLFIEKADGAYLYDVDGKAYIDYVGSWGPMVLGHNHPAIRNAVIEAAERGLSFGAPTEMEVKMAELVTNLVPTMDMVRMVNSGTEATMSAIRLARGFTGRDKIIKFEGCYHGHADCLLVKAGSGALTLGQPNSPGVPADFAKHTLTCTYNDLTSVRAAFEQYPQEIACIIVEPVAGNMNCIPPLPEFLPGLRALCDEFGALLIIDEVMTGFRVALAGAQDYYGVVPDLTCLGKIIGGGMPVGAFGGRRDVMDALAPTGPVYQAGTLSGNPIAMAAGFACLNEVAQPGIHETLDELTTRLAEGLLEAAEEANIPLVVNHVGGMFGIFFTDAESVTCYQDVMACDVERFKRFFHLMLEEGVYLAPSAFEAGFMSVAHSEEDINNTIDAARRVFAKL.

The residue at position 265 (Lys-265) is an N6-(pyridoxal phosphate)lysine.

It belongs to the class-III pyridoxal-phosphate-dependent aminotransferase family. HemL subfamily. As to quaternary structure, homodimer. The cofactor is pyridoxal 5'-phosphate.

The protein localises to the cytoplasm. It catalyses the reaction (S)-4-amino-5-oxopentanoate = 5-aminolevulinate. It participates in porphyrin-containing compound metabolism; protoporphyrin-IX biosynthesis; 5-aminolevulinate from L-glutamyl-tRNA(Glu): step 2/2. The polypeptide is Glutamate-1-semialdehyde 2,1-aminomutase (Salmonella enteritidis PT4 (strain P125109)).